A 293-amino-acid chain; its full sequence is Putative ribose uptake protein RbsU (293 aa).

The next 10 membrane-spanning stretches (helical) occupy residues 2 to 24 (SIVA…TVAS), 34 to 56 (IIGA…SSGF), 63 to 80 (LFAL…IITF), 95 to 117 (TTAF…WPGI), 122 to 139 (IGFT…MTVW), 154 to 171 (AVVL…YSAA), 180 to 202 (LTAF…FMNM), 212 to 234 (ITWL…LISA), 241 to 263 (LATG…IYFL), and 273 to 292 (VITI…TVFI).

The protein belongs to the GRP transporter (TC 2.A.7.5) family.

It localises to the cell membrane. Functionally, could be involved in the uptake of ribose. In Staphylococcus aureus (strain Mu50 / ATCC 700699), this protein is Putative ribose uptake protein RbsU (rbsU).